The following is a 124-amino-acid chain: Phosphoribosyl-AMP cyclohydrolase (124 aa).

A Mg(2+)-binding site is contributed by aspartate 82. Cysteine 83 is a binding site for Zn(2+). Mg(2+)-binding residues include aspartate 84 and aspartate 86. Residues cysteine 99 and cysteine 106 each contribute to the Zn(2+) site.

The protein belongs to the PRA-CH family. In terms of assembly, homodimer. Requires Mg(2+) as cofactor. It depends on Zn(2+) as a cofactor.

Its subcellular location is the cytoplasm. The catalysed reaction is 1-(5-phospho-beta-D-ribosyl)-5'-AMP + H2O = 1-(5-phospho-beta-D-ribosyl)-5-[(5-phospho-beta-D-ribosylamino)methylideneamino]imidazole-4-carboxamide. Its pathway is amino-acid biosynthesis; L-histidine biosynthesis; L-histidine from 5-phospho-alpha-D-ribose 1-diphosphate: step 3/9. Its function is as follows. Catalyzes the hydrolysis of the adenine ring of phosphoribosyl-AMP. The sequence is that of Phosphoribosyl-AMP cyclohydrolase from Zymomonas mobilis subsp. mobilis (strain ATCC 31821 / ZM4 / CP4).